A 219-amino-acid polypeptide reads, in one-letter code: Ribosomal RNA small subunit methyltransferase I (219 aa).

Belongs to the methyltransferase superfamily. RsmI family.

The protein localises to the cytoplasm. The enzyme catalyses cytidine(1402) in 16S rRNA + S-adenosyl-L-methionine = 2'-O-methylcytidine(1402) in 16S rRNA + S-adenosyl-L-homocysteine + H(+). In terms of biological role, catalyzes the 2'-O-methylation of the ribose of cytidine 1402 (C1402) in 16S rRNA. This chain is Ribosomal RNA small subunit methyltransferase I, found in Coprothermobacter proteolyticus (strain ATCC 35245 / DSM 5265 / OCM 4 / BT).